A 1264-amino-acid polypeptide reads, in one-letter code: Phosphatidylinositol 3,4,5-trisphosphate 5-phosphatase 2 (1264 aa).

The SH2 domain occupies 26–122 (WYHRDLSRAA…GLVCALLLPV (97 aa)). Residues 124–137 (REREPDPPDDRDVS) show a composition bias toward basic and acidic residues. Residues 124-182 (REREPDPPDDRDVSDGEDEKPPLPPRSGSTSISAPVGPGSPPAAPETPTTPAAESAPNG) form a disordered region. Serine 137 is modified (phosphoserine). The segment covering 169-180 (ETPTTPAAESAP) has biased composition (low complexity). Phosphothreonine is present on threonine 170. 2 positions are modified to phosphoserine: serine 246 and serine 358. Tyrosine 892 carries the phosphotyrosine modification. Phosphoserine is present on serine 896. The segment at 903–1123 (GAKSKAPSVS…TFLGEVASGD (221 aa)) is disordered. A compositionally biased stretch (pro residues) spans 944 to 954 (PPPTGRPPAPP). An SH3-binding motif is present at residues 950 to 955 (PPAPPR). Basic and acidic residues predominate over residues 957–971 (ASREEPLTPRLKAEG). Threonine 964 is modified (phosphothreonine). The NPXY motif motif lies at 989-992 (NPAY). Tyrosine 992 carries the phosphotyrosine modification. Pro residues-rich tracts occupy residues 1002 to 1017 (LLPPEPPSPARAPVPP), 1054 to 1065 (LPPPDFPPPPLP), and 1093 to 1110 (GPPPPKAHPRPPLPPGPS). Serine 1137 carries the post-translational modification Phosphoserine. The interval 1140 to 1178 (DYAPAGPGRSVLLPGPLELQPPRGLPSDYGRPLSFPPPR) is disordered. Residues tyrosine 1141 and tyrosine 1168 each carry the phosphotyrosine modification. An SAM domain is found at 1210–1264 (WLRAIGLERYEEGLVHNGWDDLEFLSDITEEDLEEAGVQDPAHKRLLLDTLQLSK). The residue at position 1263 (serine 1263) is a Phosphoserine.

It belongs to the inositol 1,4,5-trisphosphate 5-phosphatase family. Interacts with tyrosine phosphorylated form of SHC1. Interacts with EGFR. Upon stimulation by the EGF signaling pathway, it forms a complex with SHC1 and EGFR. Interacts with cytoskeletal protein SORBS3/vinexin, promoting its localization to the periphery of cells. Forms a complex with filamin (FLNA or FLNB), actin, GPIb (GP1BA or GP1BB) that regulates cortical and submembraneous actin. Interacts with c-Met/MET, when c-Met/MET is phosphorylated on 'Tyr-1356'. Interacts with p130Cas/BCAR1. Interacts with CENTD3/ARAP3 via its SAM domain. Interacts with c-Cbl/CBL and CAP/SORBS1. Interacts with activated EPHA2 receptor. Interacts with receptor FCGR2A. Interacts with receptor FCGR2B. Interacts with tyrosine kinase ABL1. Interacts with tyrosine kinase TEC. Interacts with CSF1R. Interacts (via N-terminus) with SH3YL1 (via SH3 domain). Interacts with FCRL6 (tyrosine phosphorylated form). Interacts (via SH2 domain) with tyrosine phosphorylated KLRC1 (via ITIM). Interacts with NEDD9/HEF1. Tyrosine phosphorylated by the members of the SRC family after exposure to a diverse array of extracellular stimuli such as insulin, growth factors such as EGF or PDGF, chemokines, integrin ligands and hypertonic and oxidative stress. May be phosphorylated upon IgG receptor FCGR2B-binding. Phosphorylated at Tyr-992 following cell attachment and spreading. Phosphorylated at Tyr-1168 following EGF signaling pathway stimulation. Phosphorylated at Thr-964 in response to PDGF.

Its subcellular location is the cytoplasm. It is found in the cytosol. It localises to the membrane. The protein resides in the cell projection. The protein localises to the filopodium. Its subcellular location is the lamellipodium. It is found in the basal cell membrane. It localises to the nucleus. The protein resides in the nucleus speckle. The protein localises to the cytoskeleton. Its subcellular location is the spindle pole. The catalysed reaction is a 1,2-diacyl-sn-glycero-3-phospho-(1D-myo-inositol-3,4,5-trisphosphate) + H2O = a 1,2-diacyl-sn-glycero-3-phospho-(1D-myo-inositol-3,4-bisphosphate) + phosphate. It carries out the reaction 1,2-dioctanoyl-sn-glycero-3-phospho-(1D-myo-inositol-3,4,5-trisphosphate) + H2O = 1,2-dioctanoyl-sn-glycero-3-phospho-(1D-myo-inositol-3,4-bisphosphate) + phosphate. The enzyme catalyses 1,2-dihexadecanoyl-sn-glycero-3-phospho-(1D-myo-inositol-3,4,5-trisphosphate) + H2O = 1,2-dihexadecanoyl-sn-glycero-3-phospho-(1D-myo-inositol-3,4-bisphosphate) + phosphate. Its activity is regulated as follows. Activated upon translocation to the sites of synthesis of PtdIns(3,4,5)P3 in the membrane. Enzymatic activity is enhanced in the presence of phosphatidylserine. Its function is as follows. Phosphatidylinositol (PtdIns) phosphatase that specifically hydrolyzes the 5-phosphate of phosphatidylinositol-3,4,5-trisphosphate (PtdIns(3,4,5)P3) to produce PtdIns(3,4)P2, thereby negatively regulating the PI3K (phosphoinositide 3-kinase) pathways. Required for correct mitotic spindle orientation and therefore progression of mitosis. Plays a central role in regulation of PI3K-dependent insulin signaling, although the precise molecular mechanisms and signaling pathways remain unclear. While overexpression reduces both insulin-stimulated MAP kinase and Akt activation, its absence does not affect insulin signaling or GLUT4 trafficking. Confers resistance to dietary obesity. May act by regulating AKT2, but not AKT1, phosphorylation at the plasma membrane. Part of a signaling pathway that regulates actin cytoskeleton remodeling. Required for the maintenance and dynamic remodeling of actin structures as well as in endocytosis, having a major impact on ligand-induced EGFR internalization and degradation. Participates in regulation of cortical and submembraneous actin by hydrolyzing PtdIns(3,4,5)P3 thereby regulating membrane ruffling. Regulates cell adhesion and cell spreading. Required for HGF-mediated lamellipodium formation, cell scattering and spreading. Acts as a negative regulator of EPHA2 receptor endocytosis by inhibiting via PI3K-dependent Rac1 activation. Acts as a regulator of neuritogenesis by regulating PtdIns(3,4,5)P3 level and is required to form an initial protrusive pattern, and later, maintain proper neurite outgrowth. Acts as a negative regulator of the FC-gamma-RIIA receptor (FCGR2A). Mediates signaling from the FC-gamma-RIIB receptor (FCGR2B), playing a central role in terminating signal transduction from activating immune/hematopoietic cell receptor systems. Involved in EGF signaling pathway. Upon stimulation by EGF, it is recruited by EGFR and dephosphorylates PtdIns(3,4,5)P3. Plays a negative role in regulating the PI3K-PKB pathway, possibly by inhibiting PKB activity. Down-regulates Fc-gamma-R-mediated phagocytosis in macrophages independently of INPP5D/SHIP1. In macrophages, down-regulates NF-kappa-B-dependent gene transcription by regulating macrophage colony-stimulating factor (M-CSF)-induced signaling. Plays a role in the localization of AURKA and NEDD9/HEF1 to the basolateral membrane at interphase in polarized cysts, thereby mediates cell cycle homeostasis, cell polarization and cilia assembly. Additionally promotion of cilia growth is also facilitated by hydrolysis of (PtdIns(3,4,5)P3) to PtdIns(3,4)P2. Promotes formation of apical membrane-initiation sites during the initial stages of lumen formation via Rho family-induced actin filament organization and CTNNB1 localization to cell-cell contacts. May also hydrolyze PtdIns(1,3,4,5)P4, and could thus affect the levels of the higher inositol polyphosphates like InsP6. Involved in endochondral ossification. This chain is Phosphatidylinositol 3,4,5-trisphosphate 5-phosphatase 2, found in Canis lupus familiaris (Dog).